We begin with the raw amino-acid sequence, 265 residues long: S-adenosylmethionine decarboxylase proenzyme (265 aa).

The active-site Schiff-base intermediate with substrate; via pyruvic acid is serine 114. Serine 114 carries the post-translational modification Pyruvic acid (Ser); by autocatalysis. Histidine 119 serves as the catalytic Proton acceptor; for processing activity. Catalysis depends on cysteine 142, which acts as the Proton donor; for catalytic activity.

The protein belongs to the prokaryotic AdoMetDC family. Type 2 subfamily. In terms of assembly, heterooctamer of four alpha and four beta chains arranged as a tetramer of alpha/beta heterodimers. Requires pyruvate as cofactor. Post-translationally, is synthesized initially as an inactive proenzyme. Formation of the active enzyme involves a self-maturation process in which the active site pyruvoyl group is generated from an internal serine residue via an autocatalytic post-translational modification. Two non-identical subunits are generated from the proenzyme in this reaction, and the pyruvate is formed at the N-terminus of the alpha chain, which is derived from the carboxyl end of the proenzyme. The post-translation cleavage follows an unusual pathway, termed non-hydrolytic serinolysis, in which the side chain hydroxyl group of the serine supplies its oxygen atom to form the C-terminus of the beta chain, while the remainder of the serine residue undergoes an oxidative deamination to produce ammonia and the pyruvoyl group blocking the N-terminus of the alpha chain.

It carries out the reaction S-adenosyl-L-methionine + H(+) = S-adenosyl 3-(methylsulfanyl)propylamine + CO2. It participates in amine and polyamine biosynthesis; S-adenosylmethioninamine biosynthesis; S-adenosylmethioninamine from S-adenosyl-L-methionine: step 1/1. In terms of biological role, catalyzes the decarboxylation of S-adenosylmethionine to S-adenosylmethioninamine (dcAdoMet), the propylamine donor required for the synthesis of the polyamines spermine and spermidine from the diamine putrescine. The chain is S-adenosylmethionine decarboxylase proenzyme from Buchnera aphidicola subsp. Acyrthosiphon pisum (strain 5A).